A 276-amino-acid chain; its full sequence is Undecaprenyl-diphosphatase 2 (276 aa).

The next 8 membrane-spanning stretches (helical) occupy residues 4–24 (IEAL…VSSL), 44–64 (DFLP…LIYF), 87–107 (ARLM…GLLL), 114–134 (LFAS…LLLW), 150–170 (LSFA…LPGF), 193–213 (FSFL…IPKL), 225–245 (LLLA…WFLM), and 256–276 (LRPF…FKLV).

Belongs to the UppP family.

The protein resides in the cell inner membrane. The enzyme catalyses di-trans,octa-cis-undecaprenyl diphosphate + H2O = di-trans,octa-cis-undecaprenyl phosphate + phosphate + H(+). Catalyzes the dephosphorylation of undecaprenyl diphosphate (UPP). Confers resistance to bacitracin. This Chromobacterium violaceum (strain ATCC 12472 / DSM 30191 / JCM 1249 / CCUG 213 / NBRC 12614 / NCIMB 9131 / NCTC 9757 / MK) protein is Undecaprenyl-diphosphatase 2.